The following is an 82-amino-acid chain: MENVLGFVALAAGLIIGLGAIGACIGIGIMGSKYLEASARQPELMNALQTKMFLLAGLIDAAFLIGVGIAMMFAFANPFQLV.

2 helical membrane passes run 7–27 and 53–73; these read FVAL…CIGI and FLLA…AMMF.

Belongs to the ATPase C chain family. F-type ATPases have 2 components, F(1) - the catalytic core - and F(0) - the membrane proton channel. F(1) has five subunits: alpha(3), beta(3), gamma(1), delta(1), epsilon(1). F(0) has three main subunits: a(1), b(2) and c(10-14). The alpha and beta chains form an alternating ring which encloses part of the gamma chain. F(1) is attached to F(0) by a central stalk formed by the gamma and epsilon chains, while a peripheral stalk is formed by the delta and b chains.

It is found in the cell inner membrane. Its function is as follows. F(1)F(0) ATP synthase produces ATP from ADP in the presence of a proton or sodium gradient. F-type ATPases consist of two structural domains, F(1) containing the extramembraneous catalytic core and F(0) containing the membrane proton channel, linked together by a central stalk and a peripheral stalk. During catalysis, ATP synthesis in the catalytic domain of F(1) is coupled via a rotary mechanism of the central stalk subunits to proton translocation. Functionally, key component of the F(0) channel; it plays a direct role in translocation across the membrane. A homomeric c-ring of between 10-14 subunits forms the central stalk rotor element with the F(1) delta and epsilon subunits. In Aromatoleum aromaticum (strain DSM 19018 / LMG 30748 / EbN1) (Azoarcus sp. (strain EbN1)), this protein is ATP synthase subunit c.